Consider the following 454-residue polypeptide: L-cysteine desulfhydrase (454 aa).

The interval 1–25 (MEAGERRNGDSMSHNHRAPKKPRLA) is disordered. Positions 14-23 (HNHRAPKKPR) are enriched in basic residues. An N6-(pyridoxal phosphate)lysine modification is found at K257.

It belongs to the class-V pyridoxal-phosphate-dependent aminotransferase family. Pyridoxal 5'-phosphate serves as cofactor. In terms of tissue distribution, highly expressed in stems and cauline leaves, and at lower levels in roots, rosette leaves and flowers.

It carries out the reaction L-cysteine + H2O = hydrogen sulfide + pyruvate + NH4(+) + H(+). Its function is as follows. Catalyzes the production of hydrogen sulfide (H2S) from cysteine. Is mainly responsible for the degradation of cysteine to generate H2S, a regulator of stomatal movement and closure. The chain is L-cysteine desulfhydrase (LCD) from Arabidopsis thaliana (Mouse-ear cress).